Consider the following 1091-residue polypeptide: MSAKAISEQTGKELLYKYICTTSAIQNRFKYARVTPDTDWARLLQDHPWLLSQSLVVKPDQLIKRRGKLGLIGVNLTLDGVKSWLKPRLGQEATVGKATGFLKNFLIEPFVPHTQEEEFYVCIYATREGDYVLFHHEGGVDVGDVDAKAQKLLVGVDEKLNPEDIKKHLLVHAPEDKKEILASFISGLFNFYEDLYFTYLEINPLVVTKDGVYVLDLAAKVDATADYICKVKWGDIEFPPPFGREAYPEEAYIADLDAKSGASLKLTLLNPKGRIWTMVAGGGASVVYSDTICDLGGVNELANYGEYSGAPSEQQTYDYAKTILSLMTREKHPDGKILIIGGSIANFTNVAATFKGIVRAIRDYQGPLKEHEVTIFVRRGGPNYQEGLRVMGEVGKTTGIPIHVFGTETHMTAIVGMALGHRPIPNQPPTAAHTANFLLNASGSTSTPAPSRTASFSESRTDEVAPAKKAKPAMLQGKSATLFSRHTKAIVWGMQTRAVQGMLDFDYVCSRDEPSVAAMVYPFTGDHKQKFYWGHKEILIPVFKNMADAMKKHPEVDVLINFASLRSAYDSTMETMNYAQIRTIAIIAEGIPEALTRKLIKKADQKGVTIIGPATVGGIKPGCFKIGNTGGMLDNILASKLYRPGSVAYVSRSGGMSNELNNIISRTTDGVYEGVAIGGDRYPGSTFMDHVLRYQDTAGVKMIVVLGEIGGTEEYKICRGVTEGRITKPVVCWCIGTCAAMFSSEVQFGHAGACANQASETAVAKNQALKEAGVFVPRSFDELGEIIQSVYEDLVARGVIVPAQEVPPPTVPMDYSWARELGLIRKPASFMTSICDERGQELIYAGMPITEVFKEEMGIGGVLGLLWFQKRLPKYSCQFIEMCLMVTADHGPAVSGAHNTIICARAGKDLVSSLTSGLLTIGDRFGGALDAAAKMFSKAFDSGIIPMEFVNKMKKEGKLIMGIGHRVKSINNPDMRVQILKDYVRQHFPATPLLDYALEVEKITTSKKPNLILNVDGLIGVAFVDMLRHCGSFTREEADEYIDIGALNGIFVLGRSMGFIGHYLDQKRLKQGLYRHPWDDISYVLPEHMSM.

Residues 4–265 (KAISEQTGKE…LDAKSGASLK (262 aa)) enclose the ATP-grasp domain. Residues lysine 58, arginine 66, glycine 67, proline 109, valine 111, and glutamate 118 each contribute to the ATP site. The residue at position 131 (tyrosine 131) is a Phosphotyrosine. An ATP-binding site is contributed by aspartate 216. Residues aspartate 257, serine 260, and alanine 262 each coordinate Mg(2+). The residue at position 263 (serine 263) is a Phosphoserine. Citrate contacts are provided by glycine 309, asparagine 346, threonine 348, tyrosine 364, and arginine 379. The span at 442–457 (SGSTSTPAPSRTASFS) shows a compositional bias: low complexity. Residues 442–471 (SGSTSTPAPSRTASFSESRTDEVAPAKKAK) form a disordered region. Phosphothreonine is present on threonine 447. Serine 451 bears the Phosphoserine mark. The residue at position 455 (serine 455) is a Phosphoserine; by PKA and PKB/AKT1 or PKB/AKT2 or BCKDK. Serine 459 is subject to Phosphoserine. Lysine 530, lysine 536, and lysine 544 each carry N6-acetyllysine; alternate. Residues lysine 530, lysine 536, and lysine 544 each participate in a glycyl lysine isopeptide (Lys-Gly) (interchain with G-Cter in ubiquitin); alternate cross-link. Residue threonine 629 is modified to Phosphothreonine. The residue at position 653 (serine 653) is a Phosphoserine. The residue at position 672 (tyrosine 672) is a Phosphotyrosine. The Tele-phosphohistidine intermediate role is filled by histidine 750. 769 to 779 (LKEAGVFVPRS) is a binding site for CoA. The residue at position 829 (serine 829) is a Phosphoserine. Lysine 938, lysine 958, lysine 968, and lysine 1067 each carry N6-acetyllysine. Position 1090 is a phosphoserine (serine 1090).

In the N-terminal section; belongs to the succinate/malate CoA ligase beta subunit family. The protein in the C-terminal section; belongs to the succinate/malate CoA ligase alpha subunit family. As to quaternary structure, homotetramer. Requires Mg(2+) as cofactor. In terms of processing, phosphorylated by PKA and GSK3 in a sequential manner; phosphorylation results in activation of its activity. Phosphorylation on Thr-447 and Ser-451 depends on the phosphorylation state of Ser-455. Phosphorylation on Ser-455 is decreased by prior phosphorylation on the other 2 residues. Phosphorylated at Ser-455 by BCKDK and dephosphorylated by protein phosphatase PPM1K. Post-translationally, ISGylated. Acetylated at Lys-530, Lys-536 and Lys-544 by KAT2B/PCAF. Acetylation is promoted by glucose and stabilizes the protein, probably by preventing ubiquitination at the same sites. Acetylation promotes de novo lipid synthesis. Deacetylated by SIRT2. In terms of processing, ubiquitinated at Lys-530, Lys-536 and Lys-544 by the BCR(KLHL25) E3 ubiquitin ligase complex and UBR4, leading to its degradation. Ubiquitination is probably inhibited by acetylation at same site. BCR(KLHL25)-mediated degradation of ACLY promotes fatty acid oxidation and is required for differentiation of inducible regulatory T (iTreg) cells.

It is found in the cytoplasm. Its subcellular location is the cytosol. It carries out the reaction oxaloacetate + acetyl-CoA + ADP + phosphate = citrate + ATP + CoA. Its activity is regulated as follows. Phosphorylation results in activation of its activity. Glucose 6-phosphate, fructose 6-phosphate, fructose 2,6-bisphosphate, ribulose 5-phosphate, and fructose 1,6-bisphosphate also act as activators. Catalyzes the cleavage of citrate into oxaloacetate and acetyl-CoA, the latter serving as common substrate in multiple biochemical reactions in protein, carbohydrate and lipid metabolism. The protein is ATP-citrate synthase (ACLY) of Bos taurus (Bovine).